A 1157-amino-acid chain; its full sequence is uncharacterized protein (1157 aa).

The span at Met-1–Ser-10 shows a compositional bias: basic and acidic residues. Disordered stretches follow at residues Met-1 to Gly-35, Gln-159 to Pro-233, and Lys-478 to Pro-498. Composition is skewed to low complexity over residues Ser-18 to Ala-31 and Ser-181 to Phe-197. The segment covering Gln-208 to Leu-228 has biased composition (polar residues). Residues Val-501–Asp-574 enclose the CSD2 domain. An RNB domain is found at Leu-608–Ala-921. One can recognise a DIS3L2 C-terminal domain in the interval Gly-973 to Ser-1030. The tract at residues Tyr-1084–His-1113 is disordered. Residues Asn-1090–Ile-1106 are compositionally biased toward polar residues.

The protein belongs to the RNR ribonuclease family.

It localises to the cytoplasm. This is an uncharacterized protein from Schizosaccharomyces pombe (strain 972 / ATCC 24843) (Fission yeast).